Here is a 504-residue protein sequence, read N- to C-terminus: ATP synthase subunit alpha (504 aa).

Residue 170–177 (GDRQTGKT) coordinates ATP.

The protein belongs to the ATPase alpha/beta chains family. As to quaternary structure, F-type ATPases have 2 components, CF(1) - the catalytic core - and CF(0) - the membrane proton channel. CF(1) has five subunits: alpha(3), beta(3), gamma(1), delta(1), epsilon(1). CF(0) has four main subunits: a(1), b(1), b'(1) and c(9-12).

The protein resides in the cellular thylakoid membrane. It carries out the reaction ATP + H2O + 4 H(+)(in) = ADP + phosphate + 5 H(+)(out). Its function is as follows. Produces ATP from ADP in the presence of a proton gradient across the membrane. The alpha chain is a regulatory subunit. This chain is ATP synthase subunit alpha, found in Prochlorococcus marinus (strain NATL1A).